The following is a 399-amino-acid chain: Centrosomal protein 43 (399 aa).

Residues Asp-70 to Gln-102 form the LisH domain. Disordered stretches follow at residues Glu-139 to His-218 and Asn-232 to Lys-308. A Phosphothreonine modification is found at Thr-143. Ser-152, Ser-156, and Ser-160 each carry phosphoserine. Positions Gly-163–Ser-172 are enriched in polar residues. Residue Thr-170 is modified to Phosphothreonine. The segment covering Pro-175–Ser-186 has biased composition (basic residues). Phosphoserine is present on Ser-202. The span at Ser-205 to His-218 shows a compositional bias: low complexity. Phosphothreonine is present on Thr-234. Acidic residues predominate over residues Pro-245–Phe-256. The span at Pro-259–Lys-275 shows a compositional bias: basic and acidic residues. The span at Ala-286–Leu-302 shows a compositional bias: low complexity. Residues Ser-301 and Ser-326 each carry the phosphoserine modification. The disordered stretch occupies residues Thr-331–Ile-353. Residue Tyr-337 is modified to Phosphotyrosine.

It belongs to the CEP43 family. In terms of assembly, homodimer. Part of a ternary complex that contains CEP350, CEP43 and MAPRE1. Interacts directly with CEP350 and MAPRE1. Interacts with CEP19. Interacts (via N-terminus) with CEP350 (via C-terminus). In terms of tissue distribution, ubiquitous. Highly expressed in heart, liver, muscle, kidney, intestine, colon, adrenal gland, prostate, testis, and pancreas.

It is found in the cytoplasm. The protein localises to the cytoskeleton. It localises to the microtubule organizing center. Its subcellular location is the centrosome. The protein resides in the centriole. It is found in the cilium basal body. Functionally, required for anchoring microtubules to the centrosomes. Required for ciliation. The polypeptide is Centrosomal protein 43 (Homo sapiens (Human)).